Here is a 1037-residue protein sequence, read N- to C-terminus: Sentrin-specific protease 7 (1037 aa).

The span at 1 to 10 shows a compositional bias: basic residues; that stretch reads MDRARPGRRR. Disordered regions lie at residues 1–27 and 185–399; these read MDRARPGRRRASSEIVTEGKRKKSSPA and SDTA…ENSS. Residues serine 12, serine 13, and serine 25 each carry the phosphoserine modification. Residues 192-208 are compositionally biased toward low complexity; sequence SEQLSSSSDGSLESCQS. The segment covering 272–282 has biased composition (polar residues); the sequence is GTSNKNTSYSY. Residues 290–300 show a composition bias toward basic residues; it reads VSRKRKKRGRS. Composition is skewed to basic and acidic residues over residues 301–321 and 328–341; these read NFHDSHNSKTSLDKPTEHTKE and VSRKLEESGEDSHQ. A compositionally biased stretch (low complexity) spans 379–399; the sequence is ASSPNKSLESSASSEVSENSS. Serine 434 and serine 435 each carry phosphoserine. The tract at residues 747–1037 is protease; it reads LGVTNEDLEC…HLQQQKGGSC (291 aa). Histidine 847 is an active-site residue. The segment at 873–909 is disordered; that stretch reads QFQGQQSQHDHKMTDNDPHTTSTVSTSAEDSQSTEVN. The span at 880–890 shows a compositional bias: basic and acidic residues; sequence QHDHKMTDNDP. Residues 891-909 show a composition bias toward polar residues; the sequence is HTTSTVSTSAEDSQSTEVN. Aspartate 926 is an active-site residue. Residue cysteine 979 is the Nucleophile of the active site.

Belongs to the peptidase C48 family.

Its subcellular location is the cytoplasm. Functionally, protease that acts as a positive regulator of the cGAS-STING pathway by catalyzing desumoylation of CGAS. Desumoylation of CGAS promotes DNA-binding activity of CGAS, subsequent oligomerization and activation. Deconjugates SUMO2 and SUMO3 from targeted proteins, but not SUMO1. Catalyzes the deconjugation of poly-SUMO2 and poly-SUMO3 chains. Has very low efficiency in processing full-length SUMO proteins to their mature forms. The protein is Sentrin-specific protease 7 of Mus musculus (Mouse).